The following is a 1881-amino-acid chain: Ankyrin-1 (1881 aa).

Residues 1–827 form an 89 kDa domain region; that stretch reads MPYSVGFREA…EDEGEELISF (827 aa). 23 ANK repeats span residues 44–73, 77–106, 110–139, 143–172, 174–201, 205–234, 238–267, 271–300, 304–333, 337–366, 370–399, 403–432, 436–465, 469–498, 502–531, 535–564, 568–597, 601–630, 634–663, 667–696, 700–729, 733–762, and 766–795; these read NGLN…ILET, KGNT…NVNA, KGFT…NQNV, DGFT…KGKV, LPAL…NPDV, TGFT…SVNF, NGIT…QIET, DELT…PIQA, NGLS…EIDD, DHLT…KPNS, NGFT…SIDA, SGLT…SPNV, KVET…KVNA, DDQT…NPNL, AGHT…SQAC, KGFT…HPNA, NGLT…SPHS, NGYT…SANA, QGVT…NGNL, SGLT…MVDA, MGYT…DVNA, LGYS…SPNE, and DGTT…ETSF. At N105 the chain carries (3S)-3-hydroxyasparagine; by HIF1AN; partial. N233 carries the (3S)-3-hydroxyasparagine; by HIF1AN; partial modification. The residue at position 429 (S429) is a Phosphoserine. A (3S)-3-hydroxyasparagine; by HIF1AN; partial mark is found at N431 and N464. (3S)-3-hydroxyasparagine; by HIF1AN; partial is present on residues N629 and N662. Position 695 is a (3S)-3-hydroxyaspartate; by HIF1AN; partial (D695). The residue at position 728 (N728) is a (3S)-3-hydroxyasparagine; by HIF1AN; partial. Phosphoserine is present on S759. N761 is modified ((3S)-3-hydroxyasparagine; by HIF1AN; partial). A phosphoserine mark is found at S781, S817, S834, and S856. Residues 875–904 form a disordered region; that stretch reads EEQEQASKEYDEDSLIPSSPATETSDNISP. The segment covering 890-904 has biased composition (polar residues); the sequence is IPSSPATETSDNISP. ZU5 domains follow at residues 913-1068 and 1070-1216; these read FLVS…IMSR and CQDY…LSDC. T961 carries the phosphothreonine modification. Y1073 is modified (phosphotyrosine). S1082 is modified (phosphoserine). The UPA domain stretch occupies residues 1234 to 1362; that stretch reads TAVPYMAKFV…QHILCHLNIT (129 aa). 2 positions are modified to phosphothreonine: T1378 and T1380. The segment at 1383-1881 is 55 kDa regulatory domain; the sequence is ALRYSILSES…SKDHTSTPNP (499 aa). A phosphoserine mark is found at S1390, S1392, and S1396. T1400 carries the phosphothreonine modification. In terms of domain architecture, Death spans 1403–1487; the sequence is AEMKMAVISE…EIVNMLEGSG (85 aa). 2 positions are modified to phosphoserine: S1428 and S1486. The tract at residues 1486-1510 is disordered; the sequence is SGRQSRNLKPDRRHTDRDYSLSPSQ. The span at 1493–1504 shows a compositional bias: basic and acidic residues; that stretch reads LKPDRRHTDRDY. A phosphoserine mark is found at S1523 and S1533. The tract at residues 1583–1613 is disordered; it reads SSLECSKAEDSDATGHEWKLEGALSEEPRGP. The segment covering 1588–1612 has biased composition (basic and acidic residues); sequence SKAEDSDATGHEWKLEGALSEEPRG. Phosphoserine is present on S1617. 3 disordered regions span residues 1637–1703, 1718–1791, and 1840–1859; these read LLEQ…LQDW, QGSW…EAKN, and ADAA…EDPS. Residues 1642 to 1658 show a composition bias toward basic and acidic residues; that stretch reads EGQRSEEKLPGSKRQDD. Phosphoserine occurs at positions 1666, 1671, 1686, 1690, and 1696. Positions 1683-1694 are enriched in polar residues; that stretch reads ITHSPTVSQVTE. Composition is skewed to polar residues over residues 1718-1739 and 1758-1771; these read QGSW…STMT and SEHT…AESS. Basic and acidic residues predominate over residues 1772 to 1781; the sequence is QADRDRRQQG.

Component of the ankyrin-1 complex in the erythrocyte, composed of ANK1, RHCE, RHAG, SLC4A1, EPB42, GYPA, GYPB and AQP1. Interacts with a number of integral membrane proteins and cytoskeletal proteins. Interacts (via N-terminus) with SPTB/spectrin (beta chain). Also interacts with TTN/titin. Isoform Mu17 interacts with OBSCN isoform 3/obscurin. Interacts with HIF1AN. Interacts (via ANK 1-5 repeats) with RHCE; this interaction mediates the primary membrane attachment site for ANK1. Interacts (via ANK 1-2 repeats) with AQP1 (via the N-terminal). Interacts (via ANK 1-13 repeats) with EPB42. Interacts directly with SLC4A1 (via the cytoplasmic domain); this interaction is mediated by the SLC4A1 Band 3-II and Band 3-III dimers. In terms of processing, regulated by phosphorylation. Palmitoylated. Post-translationally, hydroxylated by HIF1AN at several asparagine and 1 aspartate residue within ANK repeat region. Hydroxylation seems to increase the conformational stability of this region and may also modulate protein-protein interactions mediated by the ANK repeat region. In terms of processing, (Microbial infection) Probably cleaved by P.falciparum SERA6; the cleavage probably causes the disruption of the actin cytoskeleton and the rupture of the erythrocyte cell membrane releasing the merozoites. In terms of tissue distribution, isoform Mu17, isoform Mu18, isoform Mu19 and isoform Mu20 are expressed in skeletal muscle. Isoform Br21 is expressed in brain.

Its subcellular location is the cytoplasm. It localises to the cytoskeleton. It is found in the membrane. The protein resides in the myofibril. The protein localises to the sarcomere. Its subcellular location is the m line. It localises to the sarcoplasmic reticulum. Its function is as follows. Component of the ankyrin-1 complex, a multiprotein complex involved in the stability and shape of the erythrocyte membrane. Attaches integral membrane proteins to cytoskeletal elements; binds to the erythrocyte membrane protein band 4.2, to Na-K ATPase, to the lymphocyte membrane protein GP85, and to the cytoskeletal proteins fodrin, tubulin, vimentin and desmin. Erythrocyte ankyrins also link spectrin (beta chain) to the cytoplasmic domain of the erythrocytes anion exchange protein; they retain most or all of these binding functions. Functionally, together with obscurin in skeletal muscle may provide a molecular link between the sarcoplasmic reticulum and myofibrils. This is Ankyrin-1 from Homo sapiens (Human).